We begin with the raw amino-acid sequence, 113 residues long: MHEMSIAISIIDAVAAKAEAEHADTVTIVELEVGKVAGVEVESLKFCFSAAAKNTVAEGAELAVCEVEPVGECEACGQRFPVAFHVATCTSCGSFKTNIVSGRELLIKSITIE.

Residue histidine 2 coordinates Ni(2+). Zn(2+) contacts are provided by cysteine 73, cysteine 76, cysteine 89, and cysteine 92.

This sequence belongs to the HypA/HybF family.

Functionally, involved in the maturation of [NiFe] hydrogenases. Required for nickel insertion into the metal center of the hydrogenase. The protein is Hydrogenase maturation factor HypA of Chlorobium phaeobacteroides (strain BS1).